Reading from the N-terminus, the 190-residue chain is Large ribosomal subunit protein bL25 (190 aa).

A disordered region spans residues 1–20 (MSEQKTLSVQKRDNLGKGAN).

Belongs to the bacterial ribosomal protein bL25 family. CTC subfamily. In terms of assembly, part of the 50S ribosomal subunit; part of the 5S rRNA/L5/L18/L25 subcomplex. Contacts the 5S rRNA. Binds to the 5S rRNA independently of L5 and L18.

Its function is as follows. This is one of the proteins that binds to the 5S RNA in the ribosome where it forms part of the central protuberance. This Nitratidesulfovibrio vulgaris (strain ATCC 29579 / DSM 644 / CCUG 34227 / NCIMB 8303 / VKM B-1760 / Hildenborough) (Desulfovibrio vulgaris) protein is Large ribosomal subunit protein bL25.